The chain runs to 428 residues: Lysophosphatidic acid phosphatase type 6 (428 aa).

A mitochondrion-targeting transit peptide spans 1–32; it reads MITGVFSMRLWTPVGVLTSLAYCLHQRRVALA. The tract at residues 58–168 is substrate binding; that stretch reads RHGARSPLKP…VFIRSTNIFR (111 aa). The active-site Nucleophile is His59. Asp335 serves as the catalytic Proton donor.

The protein belongs to the histidine acid phosphatase family. In terms of assembly, monomer. Highly expressed in kidney, heart, small intestine, muscle, liver, prostate, testis, ovary and weakly expressed in thymus and colon.

Its subcellular location is the mitochondrion. It catalyses the reaction a phosphate monoester + H2O = an alcohol + phosphate. It carries out the reaction 1-(9Z-octadecenoyl)-sn-glycero-3-phosphate + H2O = 1-(9Z-octadecenoyl)-sn-glycerol + phosphate. Hydrolyzes lysophosphatidic acid (LPA) containing a medium length fatty acid chain to the corresponding monoacylglycerol. Has highest activity with lysophosphatidic acid containing myristate (C14:0), monounsaturated oleate (C18:1) or palmitate (C16:0), and lower activity with C18:0 and C6:0 lysophosphatidic acid. The chain is Lysophosphatidic acid phosphatase type 6 (ACP6) from Homo sapiens (Human).